A 116-amino-acid chain; its full sequence is uncharacterized protein (116 aa).

Residues 1 to 72 (MCKHVLNAQV…SDEYCPNCDN (72 aa)) form a CHY-type zinc finger. C2, H4, C16, C17, C23, C26, H27, H33, C45, C48, C67, and C70 together coordinate Zn(2+).

The protein resides in the cytoplasm. This is an uncharacterized protein from Schizosaccharomyces pombe (strain 972 / ATCC 24843) (Fission yeast).